Reading from the N-terminus, the 415-residue chain is Tyrosine--tRNA ligase (415 aa).

The short motif at 54-63 is the 'HIGH' region element; that stretch reads PTGRDIHLGH. The 'KMSKS' region signature appears at 248 to 252; the sequence is KMSKS. Lysine 251 contacts ATP. The 65-residue stretch at 351–415 folds into the S4 RNA-binding domain; it reads AKAFYLLSAI…GKKTFRRLTR (65 aa).

It belongs to the class-I aminoacyl-tRNA synthetase family. TyrS type 2 subfamily. Homodimer.

The protein localises to the cytoplasm. The catalysed reaction is tRNA(Tyr) + L-tyrosine + ATP = L-tyrosyl-tRNA(Tyr) + AMP + diphosphate + H(+). Its function is as follows. Catalyzes the attachment of tyrosine to tRNA(Tyr) in a two-step reaction: tyrosine is first activated by ATP to form Tyr-AMP and then transferred to the acceptor end of tRNA(Tyr). The chain is Tyrosine--tRNA ligase from Prochlorococcus marinus (strain MIT 9313).